Here is a 243-residue protein sequence, read N- to C-terminus: 7-cyano-7-deazaguanine synthase (243 aa).

14 to 24 (FSGGQDSATCL) serves as a coordination point for ATP. The Zn(2+) site is built by cysteine 202, cysteine 217, cysteine 220, and cysteine 223.

The protein belongs to the QueC family. The cofactor is Zn(2+).

The catalysed reaction is 7-carboxy-7-deazaguanine + NH4(+) + ATP = 7-cyano-7-deazaguanine + ADP + phosphate + H2O + H(+). It functions in the pathway purine metabolism; 7-cyano-7-deazaguanine biosynthesis. Functionally, catalyzes the ATP-dependent conversion of 7-carboxy-7-deazaguanine (CDG) to 7-cyano-7-deazaguanine (preQ(0)). This is 7-cyano-7-deazaguanine synthase from Paraburkholderia phymatum (strain DSM 17167 / CIP 108236 / LMG 21445 / STM815) (Burkholderia phymatum).